The primary structure comprises 68 residues: Cell division protein ZapB (68 aa).

Positions 3-58 form a coiled coil; it reads LELLSKLETKIQAALETIELLKMELEEEKQKNHTLNEQNQQLSQDLTSWNEKVTGL.

The protein belongs to the ZapB family. As to quaternary structure, homodimer. The ends of the coiled-coil dimer bind to each other, forming polymers. Interacts with FtsZ.

Its subcellular location is the cytoplasm. Non-essential, abundant cell division factor that is required for proper Z-ring formation. It is recruited early to the divisome by direct interaction with FtsZ, stimulating Z-ring assembly and thereby promoting cell division earlier in the cell cycle. Its recruitment to the Z-ring requires functional FtsA or ZipA. This is Cell division protein ZapB from Shewanella loihica (strain ATCC BAA-1088 / PV-4).